Reading from the N-terminus, the 258-residue chain is Snake venom serine protease HS114 (258 aa).

The first 18 residues, 1–18 (MVLVRVVANLLILQLSYA), serve as a signal peptide directing secretion. The propeptide occupies 19 to 24 (QKVSEL). The Peptidase S1 domain maps to 25–249 (VVGGDECNIN…YNTWIESVIA (225 aa)). Intrachain disulfides connect C31-C163, C50-C66, C98-C256, C142-C210, C174-C189, and C200-C225. An N-linked (GlcNAc...) asparagine glycan is attached at N44. Residues H65 and D110 each act as charge relay system in the active site. The active-site Charge relay system is the S204.

Belongs to the peptidase S1 family. Snake venom subfamily. In terms of assembly, monomer. In terms of processing, N-glycosylated. Contains approximately 10% carbohydrates. In terms of tissue distribution, expressed by the venom gland.

Its subcellular location is the secreted. With respect to regulation, inhibited by benzamidine, PMSF, leupeptin, SDS and DTT, but not by EDTA, and commercial antivenom. Its function is as follows. Snake venom serine protease that shows non-specific action on fibrinogen. It preferentially degrades fibrinogen Aalpha (FGA), releasing fibrinopeptide A, and shows a lower activity on fibrinogen Bbeta (FGB), releasing fibrinopeptide B and other uncommon fibrinopeptides. Also shows low fibrinolytic activity compared to plasmin. Has high enzymatic activity on the substrates for activated protein C and factor XIa, and for thrombin. Shows a wide activity spectrum at different peptide sequences, with a preferential cleavage at Lys-|-Xaa over Arg-|-Xaa bonds. This Bothrops jararaca (Jararaca) protein is Snake venom serine protease HS114.